The sequence spans 244 residues: MAGHSKWAQIKRKKAANDLKRGKLISKHLRAIQAAARAGGSPYPEANVQLRNAIEAARADDVPMENIERLLQKLQGGGEGAEQYEEIVYEGYAPGGVALLVYALTDNRNRTASEVRHVFSKHGGSLGTTGSVAWQFERRGVVVCENTEAAQEAAIELGALDLEEEGENLTVYTEPTEAYRIAEALKAKGVRVEAVEVVQHPQNTVALPPEEAQKVMRLVEALEDLDDVQHVYTNLDPESLQVEA.

It belongs to the TACO1 family.

It localises to the cytoplasm. This Thermus thermophilus (strain ATCC BAA-163 / DSM 7039 / HB27) protein is Probable transcriptional regulatory protein TT_C0469.